Here is a 426-residue protein sequence, read N- to C-terminus: Elongation factor Tu, mitochondrial (426 aa).

Residues 1-27 (MFKNLAGSFRAVSRVAFKTRPSLVRSY) constitute a mitochondrion transit peptide. A tr-type G domain is found at 34–230 (KPHVNIGTIG…AVDEHIPTPT (197 aa)). The segment at 43-50 (GHVDHGKT) is G1. 43 to 50 (GHVDHGKT) is a GTP binding site. A G2 region spans residues 84–88 (GITIS). The tract at residues 105-108 (DCPG) is G3. GTP is bound by residues 105–109 (DCPGH) and 160–163 (NKVD). Residues 160 to 163 (NKVD) are G4. The segment at 198 to 200 (SAL) is G5.

Belongs to the TRAFAC class translation factor GTPase superfamily. Classic translation factor GTPase family. EF-Tu/EF-1A subfamily.

The protein resides in the mitochondrion. It functions in the pathway protein biosynthesis; polypeptide chain elongation. G-protein that, in its active GTP-bound form, binds to and delivers aminoacyl-tRNA to the A-site of ribosomes during protein biosynthesis. In the presence of a correct codon-anticodon match between the aminoacyl-tRNA and the A-site codon of the ribosome-bound mRNA, the ribosome acts as a GTPase activator and the GTP is hydrolyzed. The inactive GDP-bound form leaves the ribosome and must be recycled before binding another molecule of aminoacyl-tRNA. Required for mitochondrial protein biosynthesis and maintenance of mitochondrial DNA. The sequence is that of Elongation factor Tu, mitochondrial (TUF1) from Meyerozyma guilliermondii (strain ATCC 6260 / CBS 566 / DSM 6381 / JCM 1539 / NBRC 10279 / NRRL Y-324) (Yeast).